The chain runs to 427 residues: MTSRNETLFQRAQKSIPGGVNSPVRAFRSVGGTPRFISRAEGARVWDADGKAYVDYVGSWGPAIAGHAHPAIVEAVREAALAGLSFGAPSEAEVDIAELICELMPSIEMVRLVSSGTEATMSAIRLARGFTGRDAIVKFEGCYHGHADSLLVKAGSGLLTFGNPSSGGVPADFAKHTIVLDYNDLQQVEDAFRARGGEIAAVIVEAIAGNMNLVKPLPGFLEGLRRLCTEYGVVLIFDEVMTGFRVGPQGVQGLYGIMPDLTTLGKVIGGGMPVGAFGGRRDIMEKIAPLGSVYQAGTLSGSPVAVAAGLASLKLLREPGFYENLGARTTQLVTGLAAAANDAGVTFSADSVGGMFGVYFSAAVPKSFADVMASDRDAFNRFFHAMLDAGHYFAPSAFEAGFVSAAHTAADIDETIAAAREVFARLG.

Residue Lys266 is modified to N6-(pyridoxal phosphate)lysine.

The protein belongs to the class-III pyridoxal-phosphate-dependent aminotransferase family. HemL subfamily. In terms of assembly, homodimer. Requires pyridoxal 5'-phosphate as cofactor.

The protein localises to the cytoplasm. It catalyses the reaction (S)-4-amino-5-oxopentanoate = 5-aminolevulinate. The protein operates within porphyrin-containing compound metabolism; protoporphyrin-IX biosynthesis; 5-aminolevulinate from L-glutamyl-tRNA(Glu): step 2/2. The chain is Glutamate-1-semialdehyde 2,1-aminomutase from Aromatoleum aromaticum (strain DSM 19018 / LMG 30748 / EbN1) (Azoarcus sp. (strain EbN1)).